The chain runs to 483 residues: Inositol-pentakisphosphate 2-kinase (483 aa).

The EXKPK motif signature appears at 140–144 (EIKPK). The interval 279 to 298 (SNRSGEPRKMHLSESKPHCE) is disordered. A compositionally biased stretch (basic and acidic residues) spans 281–297 (RSGEPRKMHLSESKPHC).

Belongs to the IPK1 type 2 family. Expressed both maternally and zygotically. Expressed in cleavage-stage embryos. Ubiquitously distributed throughout blastula stages of embryogenesis. At the onset of gastrulation, it is enriched in cells around the blastoderm margin. At shield stage, expression is detected in the deep involuted cells that contribute to mesendoderm. During mid and late gastrula stages, it is strongly expressed in axial mesendoderm. However, it is not present in the nascent tailbud at yolk plug closure (YPC) stage. Expression in axial mesendoderm is reduced at the 2 somite stage (SS). At 6 SS, it is expressed in cells surrounding Kupffer's vesicle, but apparently not within. By 10 SS, it is no longer detected as a specific signal above background.

It localises to the cytoplasm. Its subcellular location is the nucleus. The enzyme catalyses 1D-myo-inositol 1,3,4,5,6-pentakisphosphate + ATP = 1D-myo-inositol hexakisphosphate + ADP + H(+). Phosphorylates Ins(1,3,4,5,6)P5 at position 2 to form Ins(1,2,3,4,5,6)P6 (InsP6 or phytate). InsP6 is involved in many processes such as mRNA export, non-homologous end-joining, endocytosis and ion channel regulation. InsP6 also acts as a key regulator of left-right asymmetry in embryo, probably by regulating asymmetric Ca(2+) during left-right specification. The protein is Inositol-pentakisphosphate 2-kinase (ippk) of Danio rerio (Zebrafish).